The following is a 475-amino-acid chain: Protein nucleotidyltransferase YdiU (475 aa).

8 residues coordinate ATP: glycine 82, glycine 84, arginine 85, lysine 105, aspartate 117, glycine 118, arginine 168, and arginine 175. Catalysis depends on aspartate 240, which acts as the Proton acceptor. Mg(2+) contacts are provided by asparagine 241 and aspartate 250. Aspartate 250 contributes to the ATP binding site.

This sequence belongs to the SELO family. It depends on Mg(2+) as a cofactor. The cofactor is Mn(2+).

The catalysed reaction is L-seryl-[protein] + ATP = 3-O-(5'-adenylyl)-L-seryl-[protein] + diphosphate. The enzyme catalyses L-threonyl-[protein] + ATP = 3-O-(5'-adenylyl)-L-threonyl-[protein] + diphosphate. It catalyses the reaction L-tyrosyl-[protein] + ATP = O-(5'-adenylyl)-L-tyrosyl-[protein] + diphosphate. It carries out the reaction L-histidyl-[protein] + UTP = N(tele)-(5'-uridylyl)-L-histidyl-[protein] + diphosphate. The catalysed reaction is L-seryl-[protein] + UTP = O-(5'-uridylyl)-L-seryl-[protein] + diphosphate. The enzyme catalyses L-tyrosyl-[protein] + UTP = O-(5'-uridylyl)-L-tyrosyl-[protein] + diphosphate. Nucleotidyltransferase involved in the post-translational modification of proteins. It can catalyze the addition of adenosine monophosphate (AMP) or uridine monophosphate (UMP) to a protein, resulting in modifications known as AMPylation and UMPylation. This is Protein nucleotidyltransferase YdiU from Aeromonas salmonicida (strain A449).